Reading from the N-terminus, the 1355-residue chain is MGSEAAAARPVVVTVNGERYEAVGVDPSTTLLEFLRTRTPVRGPKLGCGEGGCGACVVVVSKYDAVADEVTEFSASSCLTLLGSLHHCAVTTSEGIGNSRDGFHAVQRRLSGFHASQCGFCTPGMCMSIYSALAKADRCSSRPSPPPGFSKLTAAEAEKAVSGNLCRCTGYRPIVDACKSFAADVDLEDLGLNAFWKKGADDERADVGKLPAYSGGAAVCTFPEFLKSEIRSSMGQANGGAPAVAVTGDGWFHPKSVEEFHRLFDSNLFDERSVKIVASNTGSGVYKDQDLHDKYINISQILELSAINRSSKGVEIGAVVSISKAIEILSDGGAVFRKIADHLSKVASSFVQNTATIGGNIIMAQRLSFPSDIATVLLAAGSTVTIQVAAKRMCITLEEFLKQPPCDSRTLLVSISIPDWGSDDGITFESFRAAPRPLGNAVSYVNSAFLARSSVDGSSGSHLIEDVCLAFGAFGAEHAIRAREVEEFLKGKLVSAPVILEAVRLLKGVVSPAEGTTHPEYRVSLAVSYLFRFLTSLANGLDEPENANVPNGSCTNGTANGSANSSPEKHSNVDSSDLPIKSRQEMVFSDEYKPVGKPIEKTGAELQASGEAVYVDDIPAPKDCLYGAFIYSTHPHAHIKDINFRSSLASQKVITVITAKDIPTGGENIGSCFPMLGDEALFVHPVSEFAGQNIGVVIAETQKYAYMAAKQAVIEYSTENLQPPILTIEDAVQHNSYFPVPPFLAPTPIGDFNQAMSEADHKIIDGEVKLESQYYFYMETQTALAIPDEDNCITLYVSAQLPEITQNTVARCLGIPYHNVRIITRRVGGGFGGKAMKAIHVAAACAVAAFKLRRPVRMYLDRKTDMIMAGGRHPMKVKYSVGFKSDGKITGLHFDLGMNGGISPDCSPVLPVAIVGALKKYNWGALSFDIKVCKTNVSSKSAMRAPGDAQGSFIAEAIVEHIASTLSVDTNAIRRKNLHDFESLKVFYGNSAGDPSTYSLVTIFDKLASSPEYQQRAAMVEHFNAGNRWKKRGISCVPITYDVRLRPTPGKVSIMNDGSIAVEVGGVEIGQGLWTKVKQMTAFALGQLCDDGGEGLIDKVRVIQADTLSMIQGGFTGGSTTSETSCEAVRKSCAALVERLKPIKEKAGTPPWKSLIAQASMASVKLTEHAYWTPDPTFTSYLNYGAAISEVEVDVLTGETTILRSDLVYDCGQSLNPAVDLGQVEGAFVQGIGFFTNEEYTTNSDGLVINDGTWTYKIPTVDTIPKQFNVELINSARDHKRVLSSKASGEPPLLLASSVHCAMREAIRAARKEFAGAGGSPLTFQMDVPATMPIVKELCGLDVVERYLESFAAKA.

The 2Fe-2S ferredoxin-type domain occupies 9-96 (RPVVVTVNGE…HCAVTTSEGI (88 aa)). 4 residues coordinate [2Fe-2S] cluster: Cys-48, Cys-53, Cys-56, and Cys-78. The FAD-binding PCMH-type domain maps to 244–422 (VAVTGDGWFH…VSISIPDWGS (179 aa)). Positions 544 to 577 (PENANVPNGSCTNGTANGSANSSPEKHSNVDSSD) are disordered. Residues 548–566 (NVPNGSCTNGTANGSANSS) are compositionally biased toward polar residues.

Belongs to the xanthine dehydrogenase family. In terms of assembly, aldehyde oxidases (AO) are homodimers and heterodimers of AO subunits. It depends on [2Fe-2S] cluster as a cofactor. FAD is required as a cofactor. Mo-molybdopterin serves as cofactor.

The catalysed reaction is an aldehyde + O2 + H2O = a carboxylate + H2O2 + H(+). The polypeptide is Probable aldehyde oxidase 2 (Oryza sativa subsp. japonica (Rice)).